The sequence spans 393 residues: Phosphoglycerate kinase (393 aa).

Substrate contacts are provided by residues 21-23 (DFN), 59-62 (HLGR), Arg118, and Arg151. ATP is bound by residues Lys201, Glu323, and 349–352 (GGDT).

It belongs to the phosphoglycerate kinase family. Monomer.

It is found in the cytoplasm. The catalysed reaction is (2R)-3-phosphoglycerate + ATP = (2R)-3-phospho-glyceroyl phosphate + ADP. It functions in the pathway carbohydrate degradation; glycolysis; pyruvate from D-glyceraldehyde 3-phosphate: step 2/5. This is Phosphoglycerate kinase from Pelotomaculum thermopropionicum (strain DSM 13744 / JCM 10971 / SI).